A 633-amino-acid chain; its full sequence is ATP-dependent rRNA helicase SPB4 (633 aa).

Positions 11–39 match the Q motif motif; it reads FSALTPALSEWIIDAVDAMGFVKTTPVQH. The Helicase ATP-binding domain occupies 42–253; the sequence is IPMFMKNSDV…RVGLRNPVRI (212 aa). 55-62 is an ATP binding site; it reads AVTGSGKT. Residues 119–131 show a composition bias toward acidic residues; it reads EPDDEDTDMEDAD. The segment at 119-140 is disordered; that stretch reads EPDDEDTDMEDADTPPKPTFPP. A DEAD box motif is present at residues 201-204; the sequence is DEAD. The 155-residue stretch at 292-446 folds into the Helicase C-terminal domain; it reads AMKKILSSLQ…EITVTDEDAK (155 aa). Residues 530–629 adopt a coiled-coil conformation; it reads AYKDKAREKL…KQEAEDADFE (100 aa). 2 stretches are compositionally biased toward basic and acidic residues: residues 547 to 581 and 588 to 623; these read DKEE…EVRR and REHE…KQEA. Residues 547–633 form a disordered region; sequence DKEEGTKKKQ…EDADFEGFSD (87 aa). Residues 624 to 633 are compositionally biased toward acidic residues; it reads EDADFEGFSD.

The protein belongs to the DEAD box helicase family. DDX55/SPB4 subfamily. Component of pre-60S ribosomal complexes.

The protein resides in the nucleus. It localises to the nucleolus. It catalyses the reaction ATP + H2O = ADP + phosphate + H(+). Functionally, ATP-binding RNA helicase involved in the biogenesis of 60S ribosomal subunits. Binds 90S pre-ribosomal particles and dissociates from pre-60S ribosomal particles after processing of 27SB pre-rRNA. Required for the normal formation of 18S rRNA through the processing of pre-rRNAs at sites A0, A1 and A2, and the normal formation of 25S and 5.8S rRNAs through the processing of pre-rRNAs at sites C1 and C2. This Phaeosphaeria nodorum (strain SN15 / ATCC MYA-4574 / FGSC 10173) (Glume blotch fungus) protein is ATP-dependent rRNA helicase SPB4.